The primary structure comprises 272 residues: Probable prolyl 4-hydroxylase 11 (272 aa).

Topologically, residues 1-55 (MSKSTSVSTILYLRQRLQGLKIYETSDLIQHINTFDELVGEQVSVDVKIEEKTKD) are cytoplasmic. The chain crosses the membrane as a helical; Signal-anchor for type II membrane protein span at residues 56-80 (MILLCSLSPLLTTLTCSMVKVAASL). Residues 81 to 272 (RFPNERWLEV…KRHCLSLNLF (192 aa)) are Lumenal-facing. In terms of domain architecture, Fe2OG dioxygenase spans 179–272 (NGETLQVINY…KRHCLSLNLF (94 aa)). Positions 197, 199, and 261 each coordinate Fe cation.

Belongs to the P4HA family. Fe(2+) is required as a cofactor. L-ascorbate serves as cofactor.

The protein resides in the endoplasmic reticulum membrane. The catalysed reaction is L-prolyl-[collagen] + 2-oxoglutarate + O2 = trans-4-hydroxy-L-prolyl-[collagen] + succinate + CO2. Its function is as follows. Catalyzes the post-translational formation of 4-hydroxyproline in -Xaa-Pro-Gly- sequences in proline-rich peptide sequences of plant glycoproteins and other proteins. Hydroxyprolines are important constituent of many plant cell wall glycoproteins such as extensins, hydroxyproline-rich glycoproteins, lectins and arabinogalactan proteins. In Arabidopsis thaliana (Mouse-ear cress), this protein is Probable prolyl 4-hydroxylase 11.